Reading from the N-terminus, the 560-residue chain is Glutamate--tRNA ligase, chloroplastic/mitochondrial (560 aa).

An L-glutamate-binding site is contributed by 47–49 (RFA). Positions 50–60 (PSPTGNLHVGG) match the 'HIGH' region motif. Position 57 (His57) interacts with ATP. Residues Glu83, 235–239 (YNFCV), and Arg253 each bind L-glutamate. Residues Glu256 and 291–295 (KLSKR) each bind ATP. Residues 291-295 (KLSKR) carry the 'KMSKS' region motif.

Belongs to the class-I aminoacyl-tRNA synthetase family. Glutamate--tRNA ligase type 1 subfamily.

It localises to the plastid. The protein localises to the chloroplast. The protein resides in the mitochondrion. The catalysed reaction is tRNA(Glu) + L-glutamate + ATP = L-glutamyl-tRNA(Glu) + AMP + diphosphate. Catalyzes the attachment of glutamate to tRNA(Glu) in a two-step reaction: glutamate is first activated by ATP to form Glu-AMP and then transferred to the acceptor end of tRNA(Glu). The sequence is that of Glutamate--tRNA ligase, chloroplastic/mitochondrial from Hordeum vulgare (Barley).